The primary structure comprises 533 residues: Glucosidase 2 subunit beta (533 aa).

The signal sequence occupies residues 1-13; that stretch reads MLLLLLLLPMCWA. At Ser-23 the chain carries Phosphoserine. 2 LDL-receptor class A domains span residues 36-70 and 71-112; these read FTCL…AACP and NGSF…IVCE. Disulfide bonds link Cys-38–Cys-57 and Cys-55–Cys-69. Asp-48 contributes to the substrate binding site. Ca(2+) contacts are provided by Gln-49, Asp-52, Tyr-54, Asp-56, Asp-62, and Glu-63. Asp-52 is a binding site for substrate. N-linked (GlcNAc...) asparagine glycosylation occurs at Asn-71. 3 cysteine pairs are disulfide-bonded: Cys-76–Cys-98, Cys-96–Cys-111, and Cys-99–Cys-115. A Phosphoserine; by PKC modification is found at Ser-88. Residues Asp-93, Val-95, Asp-97, Asp-103, and Glu-104 each contribute to the Ca(2+) site. Position 165 is an N6-succinyllysine (Lys-165). Ser-167 bears the Phosphoserine mark. 2 EF-hand domains span residues 208-243 and 244-279; these read RERE…DTDG and DGAL…RDKY. Positions 221, 223, 225, and 232 each coordinate Ca(2+). The segment at 284-363 is disordered; it reads LPTEYPPSPP…SPTEEDRMPP (80 aa). The span at 312–336 shows a compositional bias: acidic residues; sequence TEEEDEDEEDEETEEDEDEEDEDSQ. Ser-388 and Ser-395 each carry phosphoserine; by PKC. An MRH domain is found at 418–519; the sequence is SQCYELTTNE…ELMTPAACPE (102 aa). A disulfide bridge connects residues Cys-420 and Cys-433. Ser-439 carries the phosphoserine; by PKC modification. Cystine bridges form between Cys-476/Cys-505 and Cys-490/Cys-517. N-linked (GlcNAc...) asparagine glycosylation occurs at Asn-481. Positions 530-533 match the Prevents secretion from ER motif; the sequence is HDEL.

As to quaternary structure, heterodimer of a catalytic alpha subunit (GANAB) and a beta subunit (PRKCSH). Binds glycosylated PTPRC. As to expression, ubiquitous. Highly expressed in liver, spleen, lung, duodenum, stomach, adrenal gland, pituitary, testis, corpus luteum, uterus and fetal ovary.

The protein localises to the endoplasmic reticulum. It participates in glycan metabolism; N-glycan metabolism. In terms of biological role, regulatory subunit of glucosidase II that cleaves sequentially the 2 innermost alpha-1,3-linked glucose residues from the Glc(2)Man(9)GlcNAc(2) oligosaccharide precursor of immature glycoproteins. Required for efficient PKD1/Polycystin-1 biogenesis and trafficking to the plasma membrane of the primary cilia. This Bos taurus (Bovine) protein is Glucosidase 2 subunit beta (PRKCSH).